Here is a 727-residue protein sequence, read N- to C-terminus: MPTTCGFPNCKFRSRYRGLEDNRHFYRIPKRPLILRQRWLTAIGRTEETVVSQLRICSAHFEGGEKKEGDIPVPDPTVDKQIKIELPPKESKNSDRRRKQNIPARFPRPESPSGDSPSYSKKSRSFRDFYPSLSSTPSFDPAQSPHTPHPPVLPDPQQALNDILSMTSTRMNGPSSSRPLVALLDGRDCSVEMPILKDVATVAFCDAQSTQEIHEKVLNEAVAALMYHSIKLEKEDLEKFKVLKVVFRIGYGIDNIDVKAATELGIAVCHAPGDYVEDVADSTLSLILDLFRRTYWHAKSYSETRKTIGADQVRENAVGSKKVRGSVLGILGCGRVGTAVGLRARAFGLHIIFYDPFVREGHDKALGFERVYTMDEFMSRSDCISLHCNLGDETRGIINADSLRQCKSGVYIVNTSHAGLINENDLAAALKNGHVKGAALDVHDSVRFDPNCLNPLVGCPNIINTPHSAWMTEASCKDLRINAAKEIRKAINGRCPQDLTHCINKEAVMRNSNPINRRTSSAHPLLNMGFPTLPNFPPMSMSPHFPYPNPLLAMGAQMGALNPFMGNGALPFNPAAALSSLAAAQAANAQRGSPANRSSRSSPSPHTNKSSVSPGNNGHVKTEPSSPAAKIEVDIAENDKHSMMTFLQRLIAPNGDSGASTADSGIEGGDKEKVQSDGDENMEDMEVIDAEKLKEELNIGQLEEPEEISVGLNNGNRINIDEQPLAT.

The segment at 5–60 adopts a THAP-type zinc-finger fold; sequence CGFPNCKFRSRYRGLEDNRHFYRIPKRPLILRQRWLTAIGRTEETVVSQLRICSAH. The tract at residues 64–158 is disordered; the sequence is GEKKEGDIPV…HPPVLPDPQQ (95 aa). Residues 77–94 are compositionally biased toward basic and acidic residues; sequence TVDKQIKIELPPKESKNS. NAD(+) is bound by residues tyrosine 251, 331–336, aspartate 355, 388–394, 415–417, aspartate 441, and 467–470; these read LGCGRV, CNLGDET, TSH, and HSAW. Residues 587–613 are compositionally biased toward low complexity; the sequence is ANAQRGSPANRSSRSSPSPHTNKSSVS. 2 disordered regions span residues 587 to 629 and 652 to 681; these read ANAQ…SPAA and APNG…GDEN.

Belongs to the D-isomer specific 2-hydroxyacid dehydrogenase family. In terms of assembly, homodimer.

Functionally, binds DNA and represses gene expression. Plays a role in regulation of life span, possibly by regulating transcription of genes important for lipid metabolism. In Caenorhabditis elegans, this protein is C-terminal-binding protein 1.